Reading from the N-terminus, the 217-residue chain is Hypersensitivity response secretion protein HrcR (217 aa).

The next 4 helical transmembrane spans lie at 6–26 (FASL…AMVV), 52–72 (MVLN…VGME), 158–178 (IGFL…NLLM), and 190–210 (VAIP…VLIH).

It belongs to the FliP/MopC/SpaP family.

It is found in the cell membrane. Involved in the secretion of PopA, a proteinaceous elicitor of the hypersensitivity response in plants. In Ralstonia nicotianae (strain ATCC BAA-1114 / GMI1000) (Ralstonia solanacearum), this protein is Hypersensitivity response secretion protein HrcR (hrcR).